A 312-amino-acid chain; its full sequence is Probable cell division protein WhiA (312 aa).

Residues 274 to 308 constitute a DNA-binding region (H-T-H motif); sequence SLKELGTLVPGGPISKSGVNHRLRKLNAYADELRQ.

It belongs to the WhiA family.

Involved in cell division and chromosome segregation. This Limosilactobacillus fermentum (strain NBRC 3956 / LMG 18251) (Lactobacillus fermentum) protein is Probable cell division protein WhiA.